The sequence spans 688 residues: Glycine--tRNA ligase beta subunit (688 aa).

This sequence belongs to the class-II aminoacyl-tRNA synthetase family. Tetramer of two alpha and two beta subunits.

The protein localises to the cytoplasm. The catalysed reaction is tRNA(Gly) + glycine + ATP = glycyl-tRNA(Gly) + AMP + diphosphate. This is Glycine--tRNA ligase beta subunit from Shewanella sp. (strain ANA-3).